The following is a 498-amino-acid chain: Calcitonin receptor (498 aa).

Positions 1–29 (MRFTLTRWCLTLFIFLNRPLPVLPDSADG) are cleaved as a signal peptide. Residues 30–147 (AHTPTLEPEP…FTPDKLQNAY (118 aa)) are Extracellular-facing. Disulfide bonds link Cys56-Cys82, Cys73-Cys113, and Cys96-Cys135. N-linked (GlcNAc...) asparagine glycosylation is found at Asn74, Asn126, and Asn131. The helical transmembrane segment at 148 to 170 (ILYYLAIVGHSLSILTLLISLGI) threads the bilayer. Residues 171-198 (FMFLRYFNLLAPFNALLYPTRSISCQRV) lie on the Cytoplasmic side of the membrane. A helical transmembrane segment spans residues 199–219 (TLHKNMFLTYVLNSIIIIVHL). Topologically, residues 220 to 236 (VVIVPNGELVKRDPPIC) are extracellular. Cys236 and Cys306 form a disulfide bridge. Residues 237-259 (KVLHFFHQYMMSCNYFWMLCEGV) traverse the membrane as a helical segment. Residues 260-276 (YLHTLIVVSVFAEGQRL) lie on the Cytoplasmic side of the membrane. The chain crosses the membrane as a helical span at residues 277–297 (WWYHVLGWGFPLIPTTAHAIT). At 298–313 (RAVLFNDNCWLSVDTN) the chain is on the extracellular side. A helical membrane pass occupies residues 314-337 (LLYIIHGPVMAALVVNFFFLLNIL). Residues 338–357 (RVLVKKLKESQEAESHMYLK) are Cytoplasmic-facing. A helical transmembrane segment spans residues 358–376 (AVRATLILVPLLGVQFVVL). At 377-384 (PWRPSTPL) the chain is on the extracellular side. A helical membrane pass occupies residues 385–411 (LGKIYDYVVHSLIHFQGFFVAIIYCFC). Residues 412–498 (NHEVQGALKR…MEVLEQETSA (87 aa)) are Cytoplasmic-facing.

Belongs to the G-protein coupled receptor 2 family. As to quaternary structure, heterodimer of CALCR and RAMP1, RAMP2 or RAMP3; the receptor complexes function as AMYR1, AMYR2 and AMYR3 receptors, respectively, and respond to amylin/IAPP, calcitonin/CT and CGRP1 ligands. Interacts with GPRASP2.

Its subcellular location is the cell membrane. Its function is as follows. G protein-coupled receptor activated by ligand peptides amylin (IAPP), calcitonin (CT/CALCA) and calcitonin gene-related peptide type 1 (CGRP1/CALCA). CALCR interacts with receptor-activity-modifying proteins RAMP1, 2 and 3 to form receptor complexes AMYR1, 2 and 3, respectively. IAPP, CT and CGRP1 activate CALCR and AMYRs with distinct modes of receptor activation resulting in specific phenotypes. Ligand binding causes a conformation change that triggers signaling via guanine nucleotide-binding proteins (G proteins) and modulates the activity of downstream effectors. Activates cAMP-dependent pathway. This is Calcitonin receptor from Sus scrofa (Pig).